The following is a 209-amino-acid chain: Kynurenine formamidase (209 aa).

Residue Phe-18 participates in substrate binding. His-48, His-52, and Asp-54 together coordinate Zn(2+). His-58 functions as the Proton donor/acceptor in the catalytic mechanism. 2 residues coordinate Zn(2+): His-160 and Glu-172.

It belongs to the Cyclase 1 superfamily. KynB family. Homodimer. Requires Zn(2+) as cofactor.

The catalysed reaction is N-formyl-L-kynurenine + H2O = L-kynurenine + formate + H(+). Its pathway is amino-acid degradation; L-tryptophan degradation via kynurenine pathway; L-kynurenine from L-tryptophan: step 2/2. Its function is as follows. Catalyzes the hydrolysis of N-formyl-L-kynurenine to L-kynurenine, the second step in the kynurenine pathway of tryptophan degradation. This chain is Kynurenine formamidase, found in Bordetella avium (strain 197N).